The primary structure comprises 598 residues: MAAAPWLYLSRRRSSTQTSLRRFLICSSSFDADEFISSQSRVIGGRGEEEVRFSGALFSRMIHSSTYHPYRQIPLPHSVQLLDASLGCRGFSSGSSNVSDGCDEEVESECDNDEETGVSCVESSTNPEEVERVCKVIDELFALDRNMEAVLDEMKLDLSHDLIVEVLERFRHARKPAFRFFCWAAERQGFAHDSRTYNSMMSILAKTRQFETMVSVLEEMGTKGLLTMETFTIAMKAFAAAKERKKAVGIFELMKKYKFKIGVETINCLLDSLGRAKLGKEAQVLFDKLKERFTPNMMTYTVLLNGWCRVRNLIEAARIWNDMIDHGLKPDIVAHNVMLEGLLRSMKKSDAIKLFHVMKSKGPCPNVRSYTIMIRDFCKQSSMETAIEYFDDMVDSGLQPDAAVYTCLITGFGTQKKLDTVYELLKEMQEKGHPPDGKTYNALIKLMANQKMPEHGTRIYNKMIQNEIEPSIHTFNMIMKSYFVARNYEMGRAVWDEMIKKGICPDDNSYTVLIRGLISEGKSREACRYLEEMLDKGMKTPLIDYNKFAADFHRGGQPEIFEELAQRAKFSGKFAAAEIFARWAQMTRRRCKQRFMED.

A mitochondrion-targeting transit peptide spans 1-98 (MAAAPWLYLS…RGFSSGSSNV (98 aa)). PPR repeat units lie at residues 193–227 (DSRT…GLLT), 229–261 (ETFT…KFKI), 262–292 (GVET…LKER), 296–330 (NMMT…GLKP), 331–365 (DIVA…GPCP), 366–400 (NVRS…GLQP), 401–435 (DAAV…GHPP), 436–470 (DGKT…EIEP), 471–505 (SIHT…GICP), and 506–540 (DDNS…GMKT).

The protein belongs to the PPR family. P subfamily.

It is found in the mitochondrion. The polypeptide is Pentatricopeptide repeat-containing protein At5g14820, mitochondrial (Arabidopsis thaliana (Mouse-ear cress)).